The sequence spans 86 residues: YcgL domain-containing protein XOO0428 (86 aa).

The 83-residue stretch at 1-83 (MHAYVYKSQR…PKTRVLAGEC (83 aa)) folds into the YcgL domain.

This Xanthomonas oryzae pv. oryzae (strain MAFF 311018) protein is YcgL domain-containing protein XOO0428.